We begin with the raw amino-acid sequence, 250 residues long: Probable phosphatase VPA1527 (250 aa).

Residues His-8, His-10, His-16, His-41, Glu-74, His-102, His-132, Asp-194, and His-196 each coordinate Zn(2+).

It belongs to the PHP family. Zn(2+) is required as a cofactor.

The polypeptide is Probable phosphatase VPA1527 (Vibrio parahaemolyticus serotype O3:K6 (strain RIMD 2210633)).